Consider the following 177-residue polypeptide: Large ribosomal subunit protein uL10 (177 aa).

Belongs to the universal ribosomal protein uL10 family. In terms of assembly, part of the ribosomal stalk of the 50S ribosomal subunit. The N-terminus interacts with L11 and the large rRNA to form the base of the stalk. The C-terminus forms an elongated spine to which L12 dimers bind in a sequential fashion forming a multimeric L10(L12)X complex.

Forms part of the ribosomal stalk, playing a central role in the interaction of the ribosome with GTP-bound translation factors. The sequence is that of Large ribosomal subunit protein uL10 from Leptospira interrogans serogroup Icterohaemorrhagiae serovar copenhageni (strain Fiocruz L1-130).